The chain runs to 634 residues: Putative peptidoglycan O-acetyltransferase YrhL (634 aa).

A run of 11 helical transmembrane segments spans residues Tyr-10–Leu-30, Gly-38–Leu-58, Arg-79–Asp-99, Ala-110–Phe-130, Leu-145–Ile-165, Leu-172–Glu-192, Phe-244–Leu-264, Leu-270–Leu-290, Tyr-307–Gly-327, Pro-329–Tyr-349, and Met-385–Ala-405. The segment at Lys-413–Thr-481 is disordered. A compositionally biased stretch (polar residues) spans Trp-414–Ser-429. 2 stretches are compositionally biased toward basic and acidic residues: residues Gly-430–Thr-447 and Lys-455–Thr-470.

Belongs to the acyltransferase 3 family.

It localises to the cell membrane. This chain is Putative peptidoglycan O-acetyltransferase YrhL (yrhL), found in Bacillus subtilis (strain 168).